We begin with the raw amino-acid sequence, 204 residues long: Somatotropin (204 aa).

The first 17 residues, methionine 1 to serine 17, serve as a signal peptide directing secretion. Pyrrolidone carboxylic acid is present on glutamine 18. 2 cysteine pairs are disulfide-bonded: cysteine 69–cysteine 177 and cysteine 194–cysteine 202.

The protein belongs to the somatotropin/prolactin family.

It localises to the secreted. Growth hormone plays an important role in growth control and is involved in the regulation of several anabolic processes. Implicated as an osmoregulatory substance important for seawater adaptation. The chain is Somatotropin (gh) from Seriola quinqueradiata (Five-ray yellowtail).